The chain runs to 61 residues: Small ribosomal subunit protein uS14 (61 aa).

4 residues coordinate Zn(2+): Cys-24, Cys-27, Cys-40, and Cys-43.

Belongs to the universal ribosomal protein uS14 family. Zinc-binding uS14 subfamily. Part of the 30S ribosomal subunit. Contacts proteins S3 and S10. Requires Zn(2+) as cofactor.

Its function is as follows. Binds 16S rRNA, required for the assembly of 30S particles and may also be responsible for determining the conformation of the 16S rRNA at the A site. This chain is Small ribosomal subunit protein uS14, found in Campylobacter fetus subsp. fetus (strain 82-40).